We begin with the raw amino-acid sequence, 269 residues long: 4-hydroxy-tetrahydrodipicolinate reductase (269 aa).

Residues 8–13 (GASGRM), Glu34, 98–100 (GTT), and 122–125 (APNM) contribute to the NAD(+) site. The active-site Proton donor/acceptor is the His155. His156 is a (S)-2,3,4,5-tetrahydrodipicolinate binding site. Lys159 (proton donor) is an active-site residue. 165–166 (GT) contacts (S)-2,3,4,5-tetrahydrodipicolinate.

It belongs to the DapB family.

Its subcellular location is the cytoplasm. It catalyses the reaction (S)-2,3,4,5-tetrahydrodipicolinate + NAD(+) + H2O = (2S,4S)-4-hydroxy-2,3,4,5-tetrahydrodipicolinate + NADH + H(+). The enzyme catalyses (S)-2,3,4,5-tetrahydrodipicolinate + NADP(+) + H2O = (2S,4S)-4-hydroxy-2,3,4,5-tetrahydrodipicolinate + NADPH + H(+). It functions in the pathway amino-acid biosynthesis; L-lysine biosynthesis via DAP pathway; (S)-tetrahydrodipicolinate from L-aspartate: step 4/4. Its function is as follows. Catalyzes the conversion of 4-hydroxy-tetrahydrodipicolinate (HTPA) to tetrahydrodipicolinate. This is 4-hydroxy-tetrahydrodipicolinate reductase from Desulfotalea psychrophila (strain LSv54 / DSM 12343).